The sequence spans 371 residues: MRVTMRRVLLAVGSVVALMVTLHLGQQVLECQHVLSKRRHRLMRPENEELVMVDSNHVEYRYSKEMPLIFIGGVPRSGTTLMRAMLDAHPEVRCGEETRIIPRVLAMRQAWSKSGREKMRLDEAGVTDQVLDAAMQAFILEVIAKHGEPARYLCNKDPFTLKSSVYLSRLFPNSKFLLMVRDGRASVHSMITRKVTIAGFDLNCYRDCLTKWNKAIEVMYSQCLEIGRSRCLPVYYEQLVLHPEQSMHAIMKFLGISWSDTVLHHEELIGKPGGVSLSKIERSTDQVIKPVNMEALSKWIGHIPGDVLQDMAHIAPMLARLGYDPYANPPNYGHPDPLVVNNTHRVLKGDYKTPANLKGHLQVTQNTSSSH.

The Cytoplasmic segment spans residues 1 to 8 (MRVTMRRV). A helical; Signal-anchor for type II membrane protein membrane pass occupies residues 9–25 (LLAVGSVVALMVTLHLG). Residues 26–371 (QQVLECQHVL…QVTQNTSSSH (346 aa)) are Lumenal-facing. Position 76-80 (76-80 (RSGTT)) interacts with 3'-phosphoadenylyl sulfate. Residues Cys94 and Cys154 are joined by a disulfide bond. The active-site Proton donor/acceptor is the Glu97. Residues 99–103 (RIIPR) form an interaction with peptide substrate region. Residues Arg181, Ser189, and Arg193 each contribute to the 3'-phosphoadenylyl sulfate site. Cysteines 223 and 231 form a disulfide. Residues Tyr236, 283-292 (STDQVIKPVN), and Lys298 contribute to the 3'-phosphoadenylyl sulfate site. 2 N-linked (GlcNAc...) asparagine glycosylation sites follow: Asn341 and Asn366.

Belongs to the protein sulfotransferase family.

The protein localises to the golgi apparatus membrane. The catalysed reaction is L-tyrosyl-[protein] + 3'-phosphoadenylyl sulfate = O-sulfo-L-tyrosine-[protein] + adenosine 3',5'-bisphosphate + H(+). Functionally, catalyzes the O-sulfation of tyrosine residues within acidic motifs of polypeptides, using 3'-phosphoadenylyl sulfate (PAPS) as cosubstrate. In Gallus gallus (Chicken), this protein is Protein-tyrosine sulfotransferase 2 (TPST2).